The following is a 177-amino-acid chain: CRIB domain-containing protein RIC8 (177 aa).

In terms of domain architecture, CRIB spans 17-30 (IGTPTDVKHVAHIG). The span at 72-89 (STRSRDIPRLPKSSRERS) shows a compositional bias: basic and acidic residues. The disordered stretch occupies residues 72–177 (STRSRDIPRL…SSTSDAGYLT (106 aa)). The segment covering 158–171 (GSQVESISDSSSTS) has biased composition (low complexity).

Its function is as follows. Functions as a downstream effector of Rho-related GTP binding proteins of the 'Rho of Plants' (ROPs) family. Participates in the propagation of ROP GTPase signals in specific cellular responses. This Arabidopsis thaliana (Mouse-ear cress) protein is CRIB domain-containing protein RIC8 (RIC8).